The following is a 117-amino-acid chain: MGWSWIFLFLLSGTAGVHCQIQLQQSGPELVKPGASVKISCKASGYTFTDYYINWVKQRPGQGLEWIGWIYPGSGNTKYNEKFKGKATLTVDTSSSTAYMQLSSLTSEDSAVYFCAR.

The first 19 residues, 1-19 (MGWSWIFLFLLSGTAGVHC), serve as a signal peptide directing secretion. The segment at 20–49 (QIQLQQSGPELVKPGASVKISCKASGYTFT) is framework-1. The Ig-like domain maps to 31–117 (VKPGASVKIS…EDSAVYFCAR (87 aa)). Cys41 and Cys115 form a disulfide bridge. The interval 50-54 (DYYIN) is complementarity-determining-1. Positions 55 to 68 (WVKQRPGQGLEWIG) are framework-2. Positions 69-85 (WIYPGSGNTKYNEKFKG) are complementarity-determining-2. Residues 86–117 (KATLTVDTSSSTAYMQLSSLTSEDSAVYFCAR) form a framework-3 region.

This is Immunoglobulin heavy variable 1-84 from Mus musculus (Mouse).